A 207-amino-acid polypeptide reads, in one-letter code: MLGRPKFVLASGSPRRLALLNQAGIEPDALRPADIDETPTRGELPRSCANRLARAKAEAALKSVQLDDDLRGAFVLAADTVVAVGRRILPKAELVDEASQCLRLLSGRNHRVYTAICLVTPKESFRQRLIETKVRFKRLNEDDIEAYVGSGEWRGKAGGYAVQGIAGTFVVKIVGSYTNIVGLPLYETISLLGGEGFPIRAGWLNAS.

Residue Asp79 is the Proton acceptor of the active site.

This sequence belongs to the Maf family. YhdE subfamily. A divalent metal cation serves as cofactor.

The protein localises to the cytoplasm. It catalyses the reaction dTTP + H2O = dTMP + diphosphate + H(+). The enzyme catalyses UTP + H2O = UMP + diphosphate + H(+). Nucleoside triphosphate pyrophosphatase that hydrolyzes dTTP and UTP. May have a dual role in cell division arrest and in preventing the incorporation of modified nucleotides into cellular nucleic acids. The protein is dTTP/UTP pyrophosphatase of Rhodopseudomonas palustris (strain BisB18).